We begin with the raw amino-acid sequence, 191 residues long: Lipopolysaccharide export system protein LptC (191 aa).

A helical membrane pass occupies residues 7–25 (WVIIVLSLAVLVMIGINMA).

This sequence belongs to the LptC family. As to quaternary structure, component of the lipopolysaccharide transport and assembly complex. Interacts with LptA and the LptBFG transporter complex.

The protein resides in the cell inner membrane. Involved in the assembly of lipopolysaccharide (LPS). Required for the translocation of LPS from the inner membrane to the outer membrane. Facilitates the transfer of LPS from the inner membrane to the periplasmic protein LptA. Could be a docking site for LptA. The chain is Lipopolysaccharide export system protein LptC from Escherichia coli O157:H7.